Reading from the N-terminus, the 916-residue chain is Protein translocase subunit SecA (916 aa).

Residues Gln87, 105–109, and Asp512 contribute to the ATP site; that span reads GEGKT. Residues 857–916 are disordered; the sequence is QHAEAPSMEQAVAGEDEELPEGPAPVVPLEPVRNEQKIGRNEPCPCGSGKKYKHCHGQLD. Zn(2+) contacts are provided by Cys900, Cys902, Cys911, and His912. Over residues 906 to 916 the composition is skewed to basic residues; it reads KKYKHCHGQLD.

The protein belongs to the SecA family. Monomer and homodimer. Part of the essential Sec protein translocation apparatus which comprises SecA, SecYEG and auxiliary proteins SecDF-YajC and YidC. Requires Zn(2+) as cofactor.

It is found in the cell inner membrane. The protein localises to the cytoplasm. The enzyme catalyses ATP + H2O + cellular proteinSide 1 = ADP + phosphate + cellular proteinSide 2.. Part of the Sec protein translocase complex. Interacts with the SecYEG preprotein conducting channel. Has a central role in coupling the hydrolysis of ATP to the transfer of proteins into and across the cell membrane, serving both as a receptor for the preprotein-SecB complex and as an ATP-driven molecular motor driving the stepwise translocation of polypeptide chains across the membrane. The protein is Protein translocase subunit SecA of Pseudomonas paraeruginosa (strain DSM 24068 / PA7) (Pseudomonas aeruginosa (strain PA7)).